We begin with the raw amino-acid sequence, 200 residues long: Holliday junction branch migration complex subunit RuvA (200 aa).

The segment at methionine 1–alanine 64 is domain I. A domain II region spans residues serine 65–threonine 144. Residues glutamine 145 to serine 151 form a flexible linker region. The domain III stretch occupies residues proline 152–serine 200.

This sequence belongs to the RuvA family. In terms of assembly, homotetramer. Forms an RuvA(8)-RuvB(12)-Holliday junction (HJ) complex. HJ DNA is sandwiched between 2 RuvA tetramers; dsDNA enters through RuvA and exits via RuvB. An RuvB hexamer assembles on each DNA strand where it exits the tetramer. Each RuvB hexamer is contacted by two RuvA subunits (via domain III) on 2 adjacent RuvB subunits; this complex drives branch migration. In the full resolvosome a probable DNA-RuvA(4)-RuvB(12)-RuvC(2) complex forms which resolves the HJ.

It localises to the cytoplasm. Functionally, the RuvA-RuvB-RuvC complex processes Holliday junction (HJ) DNA during genetic recombination and DNA repair, while the RuvA-RuvB complex plays an important role in the rescue of blocked DNA replication forks via replication fork reversal (RFR). RuvA specifically binds to HJ cruciform DNA, conferring on it an open structure. The RuvB hexamer acts as an ATP-dependent pump, pulling dsDNA into and through the RuvAB complex. HJ branch migration allows RuvC to scan DNA until it finds its consensus sequence, where it cleaves and resolves the cruciform DNA. The sequence is that of Holliday junction branch migration complex subunit RuvA from Opitutus terrae (strain DSM 11246 / JCM 15787 / PB90-1).